The chain runs to 317 residues: Probable deoxyhypusine synthase (317 aa).

Lysine 285 functions as the Nucleophile in the catalytic mechanism.

This sequence belongs to the deoxyhypusine synthase family. It depends on NAD(+) as a cofactor.

The catalysed reaction is [eIF5A protein]-L-lysine + spermidine = [eIF5A protein]-deoxyhypusine + propane-1,3-diamine. Its pathway is protein modification; eIF5A hypusination. In terms of biological role, catalyzes the NAD-dependent oxidative cleavage of spermidine and the subsequent transfer of the butylamine moiety of spermidine to the epsilon-amino group of a specific lysine residue of the eIF-5A precursor protein to form the intermediate deoxyhypusine residue. This chain is Probable deoxyhypusine synthase (dys), found in Methanosarcina thermophila.